Reading from the N-terminus, the 218-residue chain is MFTWTIYVSLLLVLAGTFLMNRNTNTDIIDTFKREVDLPIPAQPGPPFPLVTDYCDIVCGFGRGSAELGIPTANVPINQLPKGINDLDLGVYFGFAHIKTVDGQELSVETRRDGRTVVYNYGQYLSEANDDLSVLPMVLSVGKNPFYGNDFKTMELHIIHDFKNDFYGARVKFNILGHIRPELNYTTKEALIEDINIDIRTAQTVLATPPYQVFKQQL.

An N-terminal signal peptide occupies residues 1-19; it reads MFTWTIYVSLLLVLAGTFL. Residues Thr72 and Asn74 each contribute to the Mg(2+) site. The active-site Nucleophile is the Glu155.

It belongs to the flavokinase family. Zn(2+) is required as a cofactor. Requires Mg(2+) as cofactor.

It is found in the microsome. The protein localises to the mitochondrion inner membrane. It localises to the endoplasmic reticulum. The enzyme catalyses riboflavin + ATP = FMN + ADP + H(+). Its pathway is cofactor biosynthesis; FMN biosynthesis; FMN from riboflavin (ATP route): step 1/1. Catalyzes the phosphorylation of riboflavin (vitamin B2) to form flavin mononucleotide (FMN) coenzyme. This is Riboflavin kinase (FMN1) from Saccharomyces cerevisiae (strain ATCC 204508 / S288c) (Baker's yeast).